Here is a 390-residue protein sequence, read N- to C-terminus: MNLHEYQAKSLFQQYGIPVPKGVMINDLADLDAALGQIDSKGWVVKAQIHAGARGKAGGVKLVETAEEAEQAASELLGSSLATIQTAGKALPINALLIEQTLDIYQEFYLSLMVDRVTKTHTFVISAAGGMDIELVAEASPEKILSVHVDPTVGLMPYQCREIAFALGLTGTAFKQMASVMQGFYQLALDKDVSLLEINPLVLTAENELVALDAKVNIDSNALYRQPGLVEMRDISQEDVREAKAADHQLNYIALDGNIGCMVNGAGLAMATMDLIKLNGGEPANFLDVGGGATPERVAEAFKLILSSSDVQSILVNIFGGIVRCDLIADGIIQAVQEVGLTIPVVVRLEGTNVTLGKEKLANSGLSIITADGLADAAEKVVAVALEANQ.

The ATP-grasp domain occupies 9 to 244 (KSLFQQYGIP…ISQEDVREAK (236 aa)). ATP-binding residues include Lys-46, Glu-99, Leu-102, and Glu-107. Asn-199 and Asp-213 together coordinate Mg(2+). Residues Asn-264 and 321 to 323 (GIV) each bind substrate.

This sequence belongs to the succinate/malate CoA ligase beta subunit family. Heterotetramer of two alpha and two beta subunits. Mg(2+) serves as cofactor.

It catalyses the reaction succinate + ATP + CoA = succinyl-CoA + ADP + phosphate. It carries out the reaction GTP + succinate + CoA = succinyl-CoA + GDP + phosphate. The protein operates within carbohydrate metabolism; tricarboxylic acid cycle; succinate from succinyl-CoA (ligase route): step 1/1. In terms of biological role, succinyl-CoA synthetase functions in the citric acid cycle (TCA), coupling the hydrolysis of succinyl-CoA to the synthesis of either ATP or GTP and thus represents the only step of substrate-level phosphorylation in the TCA. The beta subunit provides nucleotide specificity of the enzyme and binds the substrate succinate, while the binding sites for coenzyme A and phosphate are found in the alpha subunit. The sequence is that of Succinate--CoA ligase [ADP-forming] subunit beta from Hydrogenovibrio crunogenus (strain DSM 25203 / XCL-2) (Thiomicrospira crunogena).